Consider the following 551-residue polypeptide: Rqc2 homolog RqcH (551 aa).

The protein belongs to the NEMF family. Associates with stalled 50S ribosomal subunits, binds to RqcP. Interacts with human fibronectin.

It is found in the secreted. Its subcellular location is the capsule. It localises to the cell surface. The protein resides in the cytoplasm. In terms of biological role, key component of the ribosome quality control system (RQC), a ribosome-associated complex that mediates the extraction of incompletely synthesized nascent chains from stalled ribosomes and their subsequent degradation. RqcH recruits Ala-charged tRNA, and with RqcP directs the elongation of stalled nascent chains on 50S ribosomal subunits, leading to non-templated C-terminal alanine extensions (Ala tail). The Ala tail promotes nascent chain degradation. May add between 1 and at least 8 Ala residues. Binds to stalled 50S ribosomal subunits. Plays a significant role in virulence. Recombinant protein binds to immobilized human fibronectin; binding is saturable and competed by heparin. Purified protein inhibits binding of whole cells to fibronectin. The protein is Rqc2 homolog RqcH of Streptococcus pneumoniae serotype 2 (strain D39 / NCTC 7466).